Consider the following 318-residue polypeptide: Death effector domain-containing protein (318 aa).

Residues 25–103 (SLHRMFDIVG…RHDLLPYVTL (79 aa)) enclose the DED domain. Residues 128 to 191 (PRALSDPEPR…SVTPDPKEKQ (64 aa)) are disordered.

Interacts with CASP8, CASP10, KRT8, KRT18, CASP3 and FADD. Homodimerizes and heterodimerizes with DEDD2. In terms of processing, exists predominantly in a mono- or diubiquitinated form. Widely expressed with highest levels in testis. Within the testis, highly expressed in germ cells but not expressed in Sertoli cells.

It is found in the cytoplasm. The protein localises to the nucleus. It localises to the nucleolus. In terms of biological role, a scaffold protein that directs CASP3 to certain substrates and facilitates their ordered degradation during apoptosis. May also play a role in mediating CASP3 cleavage of KRT18. Regulates degradation of intermediate filaments during apoptosis. May play a role in the general transcription machinery in the nucleus and might be an important regulator of the activity of GTF3C3. Inhibits DNA transcription in vitro. In Rattus norvegicus (Rat), this protein is Death effector domain-containing protein (Dedd).